A 131-amino-acid chain; its full sequence is Small ribosomal subunit protein uS11 (131 aa).

The protein belongs to the universal ribosomal protein uS11 family. Part of the 30S ribosomal subunit. Interacts with proteins S7 and S18. Binds to IF-3.

Its function is as follows. Located on the platform of the 30S subunit, it bridges several disparate RNA helices of the 16S rRNA. Forms part of the Shine-Dalgarno cleft in the 70S ribosome. The polypeptide is Small ribosomal subunit protein uS11 (Clostridium acetobutylicum (strain ATCC 824 / DSM 792 / JCM 1419 / IAM 19013 / LMG 5710 / NBRC 13948 / NRRL B-527 / VKM B-1787 / 2291 / W)).